We begin with the raw amino-acid sequence, 36 residues long: Egg-laying-like hormone (36 aa).

Lysine amide is present on Lys-36.

In terms of tissue distribution, supra, subesophageal ganglia and segmental ganglia of the ventral nerve cord and brain.

Its function is as follows. May be involved in leech reproduction. The polypeptide is Egg-laying-like hormone (Theromyzon tessulatum (Duck leech)).